Consider the following 2760-residue polypeptide: MKLSPQQAPLYGDCVVTVLLAEEDKVEDDAIFYLIFSGSTLYHCTSTRKVSSDTLETIAPGHDCCETVKVLLCASKEGLPVFVVAEEDFHFVQDEAYDAAQFLATSAGNQQALNFTRFLDRSGPPSGDVNSLDEKVALAFRHLKLPAEWNVLGTDHTLHDGGPRETLMHFAVRLGLLRLTWFLLQKPGGRGALSIHNKEGATPVSLALERGYHKLHQLLTEENAGEPDSWSSLSYEIPYGDYSVRHHRELDIYTLTSESESHCEPHGDSCTGHISKLMNIQQQLMKTNLKQMDNLMPLMVTTQDSSCVPCVPEPSDHQQLPFEETKSTVCCQGSPGRKDASPCDLSSVVEEENLICSHKKNKDTGRPGEGVEPASAVDSRSASHQDSCLQSIPDCGVKGREGLPSCGNRNEVTGTQYSGVATCQQPLSSESSVPQDVLVTEPDARQHSSGRELPDSSSTDAGAPEKAGELEHSLLTPDATTQNSKPQVGESAKERLENSDISSAEATAVQALREPKQKADVTNHVFAARAAGADAPAEASPAWSPEEIPTGKPGMETQERGCEGGITSDQSSQVLPAAAAATENKVLDGLELETLPACPCETASSLDLTVSGPRPDGMPKQNSESSAQHAQSLNSQAPLCSIAGAGTPSAESACPQSTETSSGGSVIEHGSGEASLPESTAAQPEPQGLCTAPCPEDPQADTVTSDTAAHNQKSVGSCHLCALDAKNQEKDLRQDTPSVNTLEDVPHLPSVVPQSEEKLEPDQVSPRGSSFSLASSPESESVTKDDVLSLVSSQKEKGTATPQLHRAPACSDGPDGRDLNDTDKVGDGAASPPTPSAVELQTSMGNTSPVGVGEQEGSSLTATLEVLSDSLLQSVDKAALVSDSLLPEEGGSIVVPESSTALGQGGKDKATKCPSVKEDVHSSEMSREDQRTPPPGQEISRLCEKPMSALCAGEKALQHSNSPDTPSACLQTETKHNKEVAPQSSPLMKGGAVQNLVPPKTSLSADSEQKTSSTEQSGSSLLPGGASEALRCSQPSLSVSVESIQFQGKTSACKVSRNAMEDVTVADAFLATAEPTKEDALHHVKDISDLLNQEKKTTPGLPEALLDKGVTDLQEVITPEIEPLDCKREKLEGTDLSCPTSKSKETPNNEETTQPPARDLPTETGLSAINDNGPQADMKHVTQASVPGEESNVTTVLGMVSTQAADGPPGADSIEETATRIVEAVIKQIKASNTLRTQVEIQNPPLSSSEIKEIENTGSESARVFLPGEPLQMENTQKETTGHCSVETEAPEKIILAVHRPEPAPEMPDTKTGGEVDLLSKRSAASEEEAIGNGAATPKMKQAPGTQVINRESWCAIEPCPEAASLLASKQSSECRSFIDVGLGTECATKEGVLQRESGSDSDLFHSPSDEMDSIIFSKPEEEQLLCDTTGSSSSTDDTASLDRHSSHGSDVSLPQTSKLNRSRNHQSSNGFFSHGVDPESREGESEPAGSGEMEEEEMDSITEVPANRSFLRNSMRSLSPFRRHSWGPGKNAASDAEMNQRSSMQVLGHVVRRPPIHRRSMSWCPSGVQYSAALNADFNIRSFSLEGLTGGGGVGNKPSSSLEISSANSSELRNPFSGEEQRSSLMSLSEEHLEPDQRQHHRMFDQQTCYRSKQQGFNYCTSAISSPLTKSISLMTISHPGLDNSRPFHSASANLTESITEENCNFLPPSPSKKSFEEKSGTKVSRTFSYIRNKMSSSKKSKKEKDKKTLNGHTFSPIPIVGPINCSQCMKPFTNKDAYTCASCGAFVHKGCRENLASCAKVKMKQPKGSLQAHDTSSLPTVIMRNKSSQPKERPRSAVLLAEEAIAAPMFTNRRSQQSVSLSKSVSIQNITGVGNDENMSNTWKFLSHSTDSLNKICKVNESTESLTDEGVGTDMNEGQLMGDFESDSKQLEAESWSRTVDSKFLKQQKKDVVKRQEVIYELMQTELHHIRTLKIMSDVYSRGMMTDLLFEQQMVEKLFPCLDELISIHSQFFQRILERKKESLVDKSEKNFLIKRIGDVLVSQFSGENAERLKKTYGKFCGQHNQSVNYFKDLYTKDKRFQAFVKKKMSSSVVRRLGIPECILLVTQRITKYPVLFQRILQCTKDNEVEQEDLTQSLSLVKDVIGAVDSKVASYEKKVRLGEIYTKTDSKSIMRMKSGQMFAKEDLRRKKLVRDGSVFLKSATGRLKEKDQKYVFASLDHKSTVISLKKLIVREVAHEEKGLFLISMGVKDPEMVEVHASSREERNSWIQIIQDTINSLNRDEDEGIPSENEEEKRLLDTKARELKEQLQQKDQQILLLLEEKEMIFRDMTECSTPLPEDCSPTHSPRMLFRSNTEEALKGGPLMKSAISEVEILQGLVSGSLGGTLGQPISSPVEQEVMAGPISLPRRAETFGGFDCHQLNASKGGEKEEGDDGQDLRRTESDSGLKKGGNANLVFMLKRNSEQVVQSIVHLHELLTMLQGVVLQQDSYIEDQKLVLTEKVLTRSASRPSSLIEQEKQRSLEKQRQDLANLQKQQAQHLEEKRRREREWEARELELRDREAKLAEREETVRRRQQDLERDREELQQKKGTYQCDLERLRAAQKQLEREQEQLKRDAEQLSQRQMEQDLCQVSNKHGRLMRVPSFLPNSDEFSLLSTPSITKSGSLDSELSVSPKRNSISRTQKDKGPFHILSSASQTKVPEGQSQAPSSTSTSTRLFGLSKPKEKKEKKKKSKGSRTQPGDGPAPEVPAEGEEIFC.

Disordered regions lie at residues 356 to 388, 442 to 517, 530 to 577, 604 to 711, 729 to 857, 890 to 940, 954 to 1029, and 1132 to 1162; these read CSHKKNKDTGRPGEGVEPASAVDSRSASHQDSC, PDAR…EPKQ, AAGA…VLPA, SSLD…AAHN, EKDL…EQEG, GGSI…QEIS, EKAL…ASEA, and EGTDLSCPTSKSKETPNNEETTQPPARDLPT. Residues 378–388 show a composition bias toward polar residues; that stretch reads DSRSASHQDSC. A compositionally biased stretch (basic and acidic residues) spans 442–454; it reads PDARQHSSGRELP. Residues 482–504 form an important for interaction with PRKAR2A region; sequence QNSKPQVGESAKERLENSDISSA. The segment covering 530–547 has biased composition (low complexity); it reads AAGADAPAEASPAWSPEE. Polar residues-rich tracts occupy residues 620–638, 654–664, and 701–711; these read KQNSESSAQHAQSLNSQAP, CPQSTETSSGG, and DTVTSDTAAHN. Residues 769–780 are compositionally biased toward low complexity; sequence SSFSLASSPESE. Phosphoserine is present on Ser-776. Thr-801 is subject to Phosphothreonine. A compositionally biased stretch (basic and acidic residues) spans 814-826; that stretch reads PDGRDLNDTDKVG. Residues 839-849 show a composition bias toward polar residues; sequence ELQTSMGNTSP. Over residues 906 to 931 the composition is skewed to basic and acidic residues; it reads GKDKATKCPSVKEDVHSSEMSREDQR. Thr-932 is modified (phosphothreonine). Polar residues-rich tracts occupy residues 958 to 972 and 1001 to 1020; these read QHSNSPDTPSACLQT and TSLSADSEQKTSSTEQSGSS. At Ser-962 the chain carries Phosphoserine. An important for interaction with PRKAR2A region spans residues 1213 to 1228; sequence SIEETATRIVEAVIKQ. Disordered regions lie at residues 1392–1411, 1425–1508, and 1520–1539; these read GVLQRESGSDSDLFHSPSDE, LLCD…VPAN, and SPFRRHSWGPGKNAASDAEM. Positions 1428 to 1439 are enriched in low complexity; the sequence is DTTGSSSSTDDT. Over residues 1449–1472 the composition is skewed to polar residues; it reads GSDVSLPQTSKLNRSRNHQSSNGF. Phosphoserine is present on residues Ser-1450, Ser-1468, Ser-1501, Ser-1526, and Ser-1585. The segment at 1546-1695 is important for interaction with MAP2K3; the sequence is QVLGHVVRRP…SRPFHSASAN (150 aa). Residues 1592–1628 are disordered; the sequence is GGGVGNKPSSSLEISSANSSELRNPFSGEEQRSSLMS. The segment covering 1600–1611 has biased composition (low complexity); that stretch reads SSSLEISSANSS. A phosphoserine mark is found at Ser-1625, Ser-1628, and Ser-1630. N6-methyllysine is present on Lys-1654. The interval 1733-1755 is disordered; the sequence is RNKMSSSKKSKKEKDKKTLNGHT. The segment at 1753–1800 adopts a Phorbol-ester/DAG-type zinc-finger fold; the sequence is GHTFSPIPIVGPINCSQCMKPFTNKDAYTCASCGAFVHKGCRENLASC. 3 positions are modified to phosphoserine: Ser-1838, Ser-1857, and Ser-1891. The tract at residues 1881 to 2760 is interaction with ESR1; the sequence is MSNTWKFLSH…VPAEGEEIFC (880 aa). Thr-1892 is modified (phosphothreonine). A phosphoserine mark is found at Ser-1894 and Ser-1907. Positions 1956–2153 constitute a DH domain; sequence KRQEVIYELM…KDVIGAVDSK (198 aa). Residues 2176–2280 enclose the PH domain; that stretch reads MRMKSGQMFA…WIQIIQDTIN (105 aa). 2 positions are modified to phosphoserine: Ser-2292 and Ser-2345. Residues 2292-2329 adopt a coiled-coil conformation; it reads SENEEEKRLLDTKARELKEQLQQKDQQILLLLEEKEMI. Residue Thr-2415 is modified to Phosphothreonine. The tract at residues 2422–2450 is disordered; the sequence is HQLNASKGGEKEEGDDGQDLRRTESDSGL. Basic and acidic residues predominate over residues 2439-2450; it reads QDLRRTESDSGL. 2 positions are modified to phosphoserine: Ser-2511 and Ser-2514. A coiled-coil region spans residues 2516 to 2632; it reads LIEQEKQRSL…LSQRQMEQDL (117 aa). 2 disordered regions span residues 2568–2588 and 2660–2760; these read AEREETVRRRQQDLERDREEL and TPSI…EIFC. Polar residues-rich tracts occupy residues 2660-2684 and 2696-2711; these read TPSITKSGSLDSELSVSPKRNSISR and SSASQTKVPEGQSQAP. Ser-2676 carries the phosphoserine modification. Residues 2743–2752 show a composition bias toward low complexity; it reads PGDGPAPEVP.

Interacts with the cAMP-dependent protein kinase (PKA) holoenzyme and with the regulatory subunit PRKAR2A. Interacts with RHOA. Also interacts with RHOB and RHOC. Identified in a ternary complex with RHOA and PRKAR2A. Identified in a complex with NR3C1 and RHOA. Interacts with BRAF and KSR1. Identified in a complex with BRAF and KSR1. Component of a signaling complex containing at least AKAP13, PKN1, MAPK14, ZAK and MAP2K3. Within this complex, AKAP13 interacts directly with PKN1, which in turn recruits MAPK14, MAP2K3 and ZAK. Interacts (phosphorylated form) with YWHAB and YWHAZ. Interaction with YWHAB inhibits activation of RHOA, interferes with PKN1 binding and activation of MAP kinases. Interacts with GNA12. Interacts with IKBKB. Interacts with ESR1, THRA, PPARA and NME2. Interacts (via the C-terminal domain after the PH domain) with MEF2C and RXRB. Interacts (via the C-terminal domain after the PH domain) with PRKD1. As to expression, detected in bone osteoblasts (at protein level).

The protein resides in the cytoplasm. It localises to the cytosol. The protein localises to the cell cortex. It is found in the nucleus. Its subcellular location is the membrane. Scaffold protein that plays an important role in assembling signaling complexes downstream of several types of G protein-coupled receptors. Activates RHOA in response to signaling via G protein-coupled receptors via its function as Rho guanine nucleotide exchange factor. May also activate other Rho family members. Part of a kinase signaling complex that links ADRA1A and ADRA1B adrenergic receptor signaling to the activation of downstream p38 MAP kinases, such as MAPK11 and MAPK14. Part of a signaling complex that links ADRA1B signaling to the activation of RHOA and IKBKB/IKKB, leading to increased NF-kappa-B transcriptional activity. Part of a RHOA-dependent signaling cascade that mediates responses to lysophosphatidic acid (LPA), a signaling molecule that activates G-protein coupled receptors and potentiates transcriptional activation of the glucocorticoid receptor NR3C1. Part of a signaling cascade that stimulates MEF2C-dependent gene expression in response to lysophosphatidic acid (LPA). Part of a signaling pathway that activates MAPK11 and/or MAPK14 and leads to increased transcription activation of the estrogen receptors ESR1 and ESR2. Part of a signaling cascade that links cAMP and EGFR signaling to BRAF signaling and to PKA-mediated phosphorylation of KSR1, leading to the activation of downstream MAP kinases, such as MAPK1 or MAPK3. Functions as a scaffold protein that anchors cAMP-dependent protein kinase (PKA) and PRKD1. This promotes activation of PRKD1, leading to increased phosphorylation of HDAC5 and ultimately cardiomyocyte hypertrophy. Has no guanine nucleotide exchange activity on CDC42, Ras or Rac. Required for normal embryonic heart development, and in particular for normal sarcomere formation in the developing cardiomyocytes. Plays a role in cardiomyocyte growth and cardiac hypertrophy in response to activation of the beta-adrenergic receptor by phenylephrine or isoproterenol. Required for normal adaptive cardiac hypertrophy in response to pressure overload. Plays a role in osteogenesis. The polypeptide is A-kinase anchor protein 13 (Rattus norvegicus (Rat)).